The primary structure comprises 637 residues: MANKLKVDELRLKLAERGLSTTGVKAVLVERLEEAIAEDTKKEESKSKRKRNSSNDTYESNKLIAIGEFRGMIVKELREEAIKRGLDTTGTKKDLLERLCNDANNVSNAPVKSSNGTDEAEDDNNGFEEEKKEEKIVTATKKGAAVLDQWIPDEIKSQYHVLQRGDDVYDAILNQTNVRDNNNKFFVLQVLESDSKKTYMVYTRWGRVGVKGQSKLDGPYDSWDRAIEIFTNKFNDKTKNYWSDRKEFIPHPKSYTWLEMDYGKEENDSPVNNDIPSSSSEVKPEQSKLDTRVAKFISLICNVSMMAQHMMEIGYNANKLPLGKISKSTISKGYEVLKRISEVIDRYDRTRLEELSGEFYTVIPHDFGFKKMSQFVIDTPQKLKQKIEMVEALGEIELATKLLSVDPGLQDDPLYYHYQQLNCGLTPVGNDSEEFSMVANYMENTHAKTHSGYTVEIAQLFRASRAVEADRFQQFSSSKNRMLLWHGSRLTNWAGILSQGLRIAPPEAPVTGYMFGKGVYFADMFSKSANYCYANTGANDGVLLLCEVALGDMNELLYSDYNADNLPPGKLSTKGVGKTAPNPSEAQTLEDGVVVPLGKPVERSCSKGMLLYNEYIVYNVEQIKMRYVIQVKFNYKH.

The DNA-binding element occupies 1 to 140 (MANKLKVDEL…KKEEKIVTAT (140 aa)). An SAP 1 domain is found at 2–36 (ANKLKVDELRLKLAERGLSTTGVKAVLVERLEEAI). Residues 35-46 (AIAEDTKKEESK) are compositionally biased toward basic and acidic residues. The segment at 35–56 (AIAEDTKKEESKSKRKRNSSND) is disordered. Residues 41-62 (KKEESKSKRKRNSSNDTYESNK) carry the Nuclear localization signal motif. One can recognise an SAP 2 domain in the interval 69 to 103 (FRGMIVKELREEAIKRGLDTTGTKKDLLERLCNDA). A compositionally biased stretch (polar residues) spans 106-117 (VSNAPVKSSNGT). The interval 106–134 (VSNAPVKSSNGTDEAEDDNNGFEEEKKEE) is disordered. The segment covering 118–127 (DEAEDDNNGF) has biased composition (acidic residues). The 98-residue stretch at 158–255 (QYHVLQRGDD…KEFIPHPKSY (98 aa)) folds into the WGR domain. A PARP alpha-helical domain is found at 286–404 (QSKLDTRVAK…EIELATKLLS (119 aa)). In terms of domain architecture, PARP catalytic spans 412–637 (DPLYYHYQQL…VIQVKFNYKH (226 aa)).

This sequence belongs to the ARTD/PARP family.

It localises to the nucleus. The catalysed reaction is NAD(+) + (ADP-D-ribosyl)n-acceptor = nicotinamide + (ADP-D-ribosyl)n+1-acceptor + H(+).. It carries out the reaction L-aspartyl-[protein] + NAD(+) = 4-O-(ADP-D-ribosyl)-L-aspartyl-[protein] + nicotinamide. The enzyme catalyses L-glutamyl-[protein] + NAD(+) = 5-O-(ADP-D-ribosyl)-L-glutamyl-[protein] + nicotinamide. Involved in the base excision repair (BER) pathway, by catalyzing the poly(ADP-ribosyl)ation of a limited number of acceptor proteins involved in chromatin architecture and in DNA metabolism. This modification follows DNA damages and appears as an obligatory step in a detection/signaling pathway leading to the reparation of DNA strand breaks. The chain is Poly [ADP-ribose] polymerase 2 (PARP2) from Arabidopsis thaliana (Mouse-ear cress).